The chain runs to 438 residues: Fibrinogen gamma chain (438 aa).

A signal peptide spans 1–25 (MTRLPKQGLLLLQSLALLSSAFGNI). A glycan (N-linked (GlcNAc...) asparagine) is linked at Asn-76. The 248-residue stretch at 167–414 (QIQEFTGKDC…SVTMKIMPLN (248 aa)) folds into the Fibrinogen C-terminal domain. Residues Cys-176 and Cys-205 are joined by a disulfide bond. Ca(2+) is bound by residues Asp-341, Asp-343, and Gly-347. Cysteines 349 and 362 form a disulfide.

Heterohexamer; disulfide linked. Contains 2 sets of 3 non-identical chains (alpha, beta and gamma). The 2 heterotrimers are in head to head conformation with the N-termini in a small central domain. In terms of processing, conversion of fibrinogen to fibrin is triggered by thrombin, which cleaves fibrinopeptides A and B from alpha and beta chains, and thus exposes the N-terminal polymerization sites responsible for the formation of the soft clot. The soft clot is converted into the hard clot by factor XIIIA which catalyzes the epsilon-(gamma-glutamyl)lysine cross-linking between gamma chains (stronger) and between alpha chains (weaker) of different monomers.

The protein resides in the secreted. In terms of biological role, together with fibrinogen alpha (FGA) and fibrinogen beta (FGB), polymerizes to form an insoluble fibrin matrix. Has a major function in hemostasis as one of the primary components of blood clots. The polypeptide is Fibrinogen gamma chain (fgg) (Xenopus laevis (African clawed frog)).